A 334-amino-acid chain; its full sequence is Holliday junction branch migration complex subunit RuvB (334 aa).

A large ATPase domain (RuvB-L) region spans residues 1–180; that stretch reads MSEFLTPERT…FGIILELDFY (180 aa). ATP is bound by residues Leu19, Arg20, Gly61, Lys64, Thr65, Thr66, 127–129, Arg170, Tyr180, and Arg217; that span reads EDF. Residue Thr65 participates in Mg(2+) binding. Positions 181-251 are small ATPAse domain (RuvB-S); the sequence is TVKELKEIIK…IVLKTMEVLN (71 aa). The segment at 254-334 is head domain (RuvB-H); it reads AEGLDEFDRK…KYEVPENRLF (81 aa). DNA-binding residues include Arg309 and Arg314.

Belongs to the RuvB family. As to quaternary structure, homohexamer. Forms an RuvA(8)-RuvB(12)-Holliday junction (HJ) complex. HJ DNA is sandwiched between 2 RuvA tetramers; dsDNA enters through RuvA and exits via RuvB. An RuvB hexamer assembles on each DNA strand where it exits the tetramer. Each RuvB hexamer is contacted by two RuvA subunits (via domain III) on 2 adjacent RuvB subunits; this complex drives branch migration. In the full resolvosome a probable DNA-RuvA(4)-RuvB(12)-RuvC(2) complex forms which resolves the HJ.

It is found in the cytoplasm. The catalysed reaction is ATP + H2O = ADP + phosphate + H(+). Functionally, the RuvA-RuvB-RuvC complex processes Holliday junction (HJ) DNA during genetic recombination and DNA repair, while the RuvA-RuvB complex plays an important role in the rescue of blocked DNA replication forks via replication fork reversal (RFR). RuvA specifically binds to HJ cruciform DNA, conferring on it an open structure. The RuvB hexamer acts as an ATP-dependent pump, pulling dsDNA into and through the RuvAB complex. RuvB forms 2 homohexamers on either side of HJ DNA bound by 1 or 2 RuvA tetramers; 4 subunits per hexamer contact DNA at a time. Coordinated motions by a converter formed by DNA-disengaged RuvB subunits stimulates ATP hydrolysis and nucleotide exchange. Immobilization of the converter enables RuvB to convert the ATP-contained energy into a lever motion, pulling 2 nucleotides of DNA out of the RuvA tetramer per ATP hydrolyzed, thus driving DNA branch migration. The RuvB motors rotate together with the DNA substrate, which together with the progressing nucleotide cycle form the mechanistic basis for DNA recombination by continuous HJ branch migration. Branch migration allows RuvC to scan DNA until it finds its consensus sequence, where it cleaves and resolves cruciform DNA. The sequence is that of Holliday junction branch migration complex subunit RuvB from Thermotoga petrophila (strain ATCC BAA-488 / DSM 13995 / JCM 10881 / RKU-1).